The following is a 565-amino-acid chain: 13S globulin seed storage protein 1 (565 aa).

The first 20 residues, 1–20 (MSTKLILSFSLCLMVLSCSA), serve as a signal peptide directing secretion. 2 disulfides stabilise this stretch: Cys-44/Cys-77 and Cys-120/Cys-384. The Cupin type-1 1 domain occupies 49–331 (LTASEPSRRV…FRNVDQETIS (283 aa)). Disordered regions lie at residues 126-224 (SESE…IRDG), 271-301 (GQSK…SDDD), and 356-376 (EYEE…SGRS). Basic and acidic residues-rich tracts occupy residues 137 to 224 (RDQR…IRDG), 275 to 297 (QSRE…QSRE), and 356 to 370 (EYEE…DRKR). Residues 390-539 (QNVNRPSRAD…SYDISTKEAF (150 aa)) form the Cupin type-1 2 domain.

Belongs to the 11S seed storage protein (globulins) family. As to quaternary structure, hexamer; each subunit is composed of an acidic and a basic chain derived from a single precursor and linked by a disulfide bond. As to expression, expressed only in immature seeds.

Its function is as follows. Seed storage protein. In Fagopyrum esculentum (Common buckwheat), this protein is 13S globulin seed storage protein 1 (FA02).